Here is a 1840-residue protein sequence, read N- to C-terminus: Sodium channel protein type 4 subunit alpha (1840 aa).

At 1-131 the chain is on the cytoplasmic side; that stretch reads MASSSLPNLV…RVAIKVLIHA (131 aa). Residues 36-60 show a composition bias toward basic and acidic residues; it reads EARLQRNKQMEIEEPERKPRSDLEA. Residues 36-63 form a disordered region; it reads EARLQRNKQMEIEEPERKPRSDLEAGKN. One copy of the I repeat lies at 113 to 448; the sequence is LLSPFSIVRR…VVAMAYAEQN (336 aa). The chain crosses the membrane as a helical span at residues 132–150; sequence LFSMFIMITILTNCVFMTM. Over 151–157 the chain is Extracellular; sequence SNPPSWS. Residues 158–178 form a helical membrane-spanning segment; that stretch reads KHVEYTFTGIYTFESLIKMLA. At 179 to 192 the chain is on the cytoplasmic side; the sequence is RGFCIDDFTFLRDP. The chain crosses the membrane as a helical span at residues 193–210; the sequence is WNWLDFSVITMAYVTEFV. The Extracellular portion of the chain corresponds to 211–216; that stretch reads DLGNIS. Residues 217-233 traverse the membrane as a helical segment; it reads ALRTFRVLRALKTITVI. The Cytoplasmic portion of the chain corresponds to 234 to 252; that stretch reads PGLKTIVGALIQSVKKLSD. Residues 253 to 272 form a helical membrane-spanning segment; sequence VMILTVFCLSVFALVGLQLF. At 273–385 the chain is on the extracellular side; sequence MGNLRQKCVR…PNYGYTSYDT (113 aa). A disulfide bond links C280 and C354. Residues N288, N291, N297, N303, N309, N315, N327, and N356 are each glycosylated (N-linked (GlcNAc...) asparagine). C363 and C369 are oxidised to a cystine. Residues 386–410 constitute an intramembrane region (pore-forming); it reads FSWAFLALFRLMTQDYWENLFQLTL. Topologically, residues 411–417 are extracellular; sequence RAAGKTY. A helical transmembrane segment spans residues 418–438; that stretch reads MIFFVVIIFLGSFYLINLILA. Over 439–572 the chain is Cytoplasmic; it reads VVAMAYAEQN…HIIYLIVMDP (134 aa). A disordered region spans residues 481–522; it reads AAQALESGEEADGDPTHNKDCNGSLDASGEKGPPRPSCSADS. S487 carries the phosphoserine modification. Residues 554 to 826 form an II repeat; it reads CCAPWVKFKH…QIAIGRIKWG (273 aa). A helical membrane pass occupies residues 573–591; sequence FVDLGITICIVLNTLFMAM. The Extracellular portion of the chain corresponds to 592 to 602; the sequence is EHYPMTEHFDN. The helical transmembrane segment at 603–622 threads the bilayer; the sequence is VLSVGNLVFTGIFTAEMVLK. The Cytoplasmic segment spans residues 623–636; sequence LIAMDPYEYFQQGW. A helical transmembrane segment spans residues 637–656; that stretch reads NIFDSFIVTLSLVELGLANV. Topologically, residues 657–658 are extracellular; sequence QG. The chain crosses the membrane as a helical span at residues 659–676; that stretch reads LSVLRSFRLLRVFKLAKS. Residues 677 to 692 lie on the Cytoplasmic side of the membrane; it reads WPTLNMLIKIIGNSVG. Residues 693–711 traverse the membrane as a helical segment; sequence ALGNLTLVLAIIVFIFAVV. Residues 712-740 are Extracellular-facing; the sequence is GMQLFGKSYKECVCKIASDCNLPRWHMND. C725 and C731 are joined by a disulfide. Residues 741-761 constitute an intramembrane region (pore-forming); sequence FFHSFLIVFRILCGEWIETMW. Topologically, residues 762 to 772 are extracellular; the sequence is DCMEVAGQAMC. A disulfide bridge links C763 with C772. The chain crosses the membrane as a helical span at residues 773–791; the sequence is LTVFLMVMVIGNLVVLNLF. The Cytoplasmic segment spans residues 792 to 1025; that stretch reads LALLLSSFSA…ACFKIVEHNW (234 aa). 2 disordered regions span residues 854 to 884 and 925 to 983; these read EPGG…LKDN and DLEM…GEQP. A compositionally biased stretch (basic and acidic residues) spans 868 to 884; that stretch reads EDEKKEPPPEDKELKDN. Acidic residues-rich tracts occupy residues 925-940 and 968-983; these read DLEM…FSEP and EDPE…GEQP. The stretch at 1006 to 1319 is one III repeat; it reads RGKMWWTLRR…KKYYNAMKKL (314 aa). Residues 1026–1043 form a helical membrane-spanning segment; the sequence is FETFIVFMILLSSGALAF. The Extracellular segment spans residues 1044–1056; it reads EDIYIEQRRVIRT. Residues 1057–1075 traverse the membrane as a helical segment; the sequence is ILEYADKVFTYIFILEMLL. The Cytoplasmic segment spans residues 1076–1089; the sequence is KWVAYGFKVYFTNA. Residues 1090–1108 form a helical membrane-spanning segment; it reads WCWLDFLIVDVSIISLVAN. Over 1109 to 1116 the chain is Extracellular; that stretch reads WLGYSELG. A helical membrane pass occupies residues 1117 to 1135; that stretch reads PIKSLRTLRALRPLRALSR. The Cytoplasmic segment spans residues 1136 to 1152; the sequence is FEGMRVVVNALLGAIPS. Residues 1153 to 1172 form a helical membrane-spanning segment; sequence IMNVLLVCLIFWLIFSIMGV. Residues 1173–1223 are Extracellular-facing; it reads NLFAGKFYYCVNTTTSERFDISVVNNKSESESLMYTGQVRWMNVKVNYDNV. Residue N1198 is glycosylated (N-linked (GlcNAc...) asparagine). An intramembrane region (pore-forming) is located at residues 1224–1245; that stretch reads GLGYLSLLQVATFKGWMDIMYA. Residues 1246–1262 lie on the Extracellular side of the membrane; it reads AVDSREKEEQPHYEVNL. The helical transmembrane segment at 1263–1284 threads the bilayer; sequence YMYLYFVIFIIFGSFFTLNLFI. Over 1285–1347 the chain is Cytoplasmic; the sequence is GVIIDNFNQQ…MVYDFVTKQV (63 aa). Residues 1303–1305 form an important for rapid channel inactivation region; that stretch reads IFM. One copy of the IV repeat lies at 1328-1626; sequence IPRPQNKIQG…WEKFDPDATQ (299 aa). Residues 1348–1365 traverse the membrane as a helical segment; that stretch reads FDISIMILICLNMVTMMV. At 1366 to 1376 the chain is on the extracellular side; sequence ETDDQSQLKVD. Residues 1377–1395 traverse the membrane as a helical segment; it reads ILYNINMVFIIIFTGECVL. Residues 1396–1407 lie on the Cytoplasmic side of the membrane; it reads KMFALRHYYFTI. The helical transmembrane segment at 1408–1425 threads the bilayer; it reads GWNIFDFVVVILSIVGLA. At 1426-1438 the chain is on the extracellular side; sequence LSDLIQKYFVSPT. The helical transmembrane segment at 1439 to 1455 threads the bilayer; it reads LFRVIRLARIGRVLRLI. At 1456-1474 the chain is on the cytoplasmic side; it reads RGAKGIRTLLFALMMSLPA. Residues 1475–1492 form a helical membrane-spanning segment; the sequence is LFNIGLLLFLVMFIYSIF. The Extracellular segment spans residues 1493–1514; it reads GMSNFAYVKKESGIDDMFNFET. An intramembrane region (pore-forming) is located at residues 1515-1537; the sequence is FGNSIICLFEITTSAGWDGLLNP. Topologically, residues 1538-1567 are extracellular; it reads ILNSGPPDCDPTLENPGTNVRGDCGNPSIG. C1546 and C1561 are disulfide-bonded. The chain crosses the membrane as a helical span at residues 1568 to 1590; sequence ICFFCSYIIISFLIVVNMYIAII. Residues 1591–1840 are Cytoplasmic-facing; that stretch reads LENFNVATEE…VRPGVKESLV (250 aa). One can recognise an IQ domain in the interval 1720–1749; the sequence is EEVCAIKIQRAYRRHLLQRSVKQASYMYRH. A disordered region spans residues 1775-1840; sequence HEKEGDGVQS…VRPGVKESLV (66 aa). Positions 1804 to 1813 are enriched in low complexity; it reads PTSSSDTALT. Positions 1814–1824 are enriched in pro residues; the sequence is PSPPPLPPSSS.

It belongs to the sodium channel (TC 1.A.1.10) family. Nav1.4/SCN4A subfamily. In terms of assembly, the Nav1.4 voltage-gated sodium channel consists of an ion-conducting alpha subunit SCN4A which is functional on its own and a regulatory beta subunit SCN1B. SCN1B strongly enhances the presence of SCN4A at the cell surface. SCN1B is also required for rapid channel inactivation and recovery after inactivation. It prevents the decrease of channel activity in response to repetitive, high-frequency depolarizations. Interacts with the syntrophins SNTA1, SNTB1 and SNTB2 (via PDZ domain); probably links SCN4A to the actin cytoskeleton and the extracellular matrix via the dystrophin-associated protein complex and regulates its localization in muscle cells. Interacts with TMEM233; probable regulator of the channel. Detected in skeletal muscle.

The protein localises to the cell membrane. It catalyses the reaction Na(+)(in) = Na(+)(out). Potently inhibited by tetrodotoxin and saxitoxin. Inhibited by the conotoxin GVIIJ. Pore-forming subunit of Nav1.4, a voltage-gated sodium (Nav) channel that directly mediates the depolarizing phase of action potentials in excitable membranes. Navs, also called VGSCs (voltage-gated sodium channels) or VDSCs (voltage-dependent sodium channels), operate by switching between closed and open conformations depending on the voltage difference across the membrane. In the open conformation they allow Na(+) ions to selectively pass through the pore, along their electrochemical gradient. The influx of Na+ ions provokes membrane depolarization, initiating the propagation of electrical signals throughout cells and tissues. Highly expressed in skeletal muscles, Nav1.4 generates the action potential crucial for muscle contraction. This Rattus norvegicus (Rat) protein is Sodium channel protein type 4 subunit alpha.